The following is a 528-amino-acid chain: RNA polymerase sigma factor SigA (528 aa).

Positions 1-10 are enriched in polar residues; that stretch reads MAATKASTAT. A disordered region spans residues 1–211; the sequence is MAATKASTAT…FVWDEDESEA (211 aa). 3 stretches are compositionally biased toward low complexity: residues 19 to 31, 38 to 56, and 80 to 92; these read TKSP…GAKT, AKSA…PAAR, and AAKS…PSAR. The segment covering 100–109 has biased composition (basic and acidic residues); that stretch reads APKDAQHEAA. Residues 110–173 show a composition bias toward acidic residues; sequence TDPEDALDSV…DDEDHEDLEA (64 aa). The tract at residues 295–365 is sigma-70 factor domain-2; that stretch reads LLEANLRLVV…TRAMADQART (71 aa). The Interaction with polymerase core subunit RpoC motif lies at 319–322; it reads DLIQ. A sigma-70 factor domain-3 region spans residues 374–450; the sequence is EVINKLGRIQ…DSEAVVAVDA (77 aa). Residues 463 to 516 form a sigma-70 factor domain-4 region; sequence VLDTLSEREAGVVRLRFGLTDGQPRTLDEIGQVYGVTRERIRQIESKTMSKLRH. Positions 489–508 form a DNA-binding region, H-T-H motif; sequence LDEIGQVYGVTRERIRQIES.

Belongs to the sigma-70 factor family. RpoD/SigA subfamily. Interacts transiently with the RNA polymerase catalytic core.

The protein resides in the cytoplasm. In terms of biological role, sigma factors are initiation factors that promote the attachment of RNA polymerase to specific initiation sites and are then released. This sigma factor is the primary sigma factor during exponential growth. This Mycobacterium bovis (strain ATCC BAA-935 / AF2122/97) protein is RNA polymerase sigma factor SigA.